Consider the following 268-residue polypeptide: Interleukin-1 beta (268 aa).

A propeptide spanning residues 1–116 is cleaved from the precursor; that stretch reads MAEVPELASE…TRNNDACVHD (116 aa).

This sequence belongs to the IL-1 family. As to quaternary structure, monomer. In its precursor form, weakly interacts with full-length MEFV; the mature cytokine does not interact at all. Interacts with integrins ITGAV:ITGBV and ITGA5:ITGB1; integrin-binding is required for IL1B signaling. Interacts with cargo receptor TMED10; the interaction is direct and is required for the secretion of IL1B mature form. Interacts with HSP90AB1; the interaction facilitates cargo translocation into the ERGIC. Interacts with HSP90B1; the interaction facilitates cargo translocation into the ERGIC.

Its subcellular location is the cytoplasm. The protein localises to the cytosol. The protein resides in the secreted. It localises to the lysosome. It is found in the extracellular exosome. Functionally, potent pro-inflammatory cytokine. Initially discovered as the major endogenous pyrogen, induces prostaglandin synthesis, neutrophil influx and activation, T-cell activation and cytokine production, B-cell activation and antibody production, and fibroblast proliferation and collagen production. Promotes Th17 differentiation of T-cells. Synergizes with IL12/interleukin-12 to induce IFNG synthesis from T-helper 1 (Th1) cells. Plays a role in angiogenesis by inducing VEGF production synergistically with TNF and IL6. Involved in transduction of inflammation downstream of pyroptosis: its mature form is specifically released in the extracellular milieu by passing through the gasdermin-D (GSDMD) pore. The protein is Interleukin-1 beta (IL1B) of Macaca fascicularis (Crab-eating macaque).